The sequence spans 460 residues: ATP synthase subunit beta (460 aa).

150 to 157 provides a ligand contact to ATP; it reads GGAGVGKT.

This sequence belongs to the ATPase alpha/beta chains family. As to quaternary structure, F-type ATPases have 2 components, CF(1) - the catalytic core - and CF(0) - the membrane proton channel. CF(1) has five subunits: alpha(3), beta(3), gamma(1), delta(1), epsilon(1). CF(0) has three main subunits: a(1), b(2) and c(9-12). The alpha and beta chains form an alternating ring which encloses part of the gamma chain. CF(1) is attached to CF(0) by a central stalk formed by the gamma and epsilon chains, while a peripheral stalk is formed by the delta and b chains.

It localises to the cell inner membrane. It carries out the reaction ATP + H2O + 4 H(+)(in) = ADP + phosphate + 5 H(+)(out). Its function is as follows. Produces ATP from ADP in the presence of a proton gradient across the membrane. The catalytic sites are hosted primarily by the beta subunits. This is ATP synthase subunit beta from Salmonella gallinarum (strain 287/91 / NCTC 13346).